Reading from the N-terminus, the 154-residue chain is 6,7-dimethyl-8-ribityllumazine synthase (154 aa).

Residues Phe-22, 56–58, and 80–82 contribute to the 5-amino-6-(D-ribitylamino)uracil site; these read AFE and AVI. 85–86 contacts (2S)-2-hydroxy-3-oxobutyl phosphate; it reads AT. Residue His-88 is the Proton donor of the active site. Phe-113 is a 5-amino-6-(D-ribitylamino)uracil binding site. Residue Arg-127 coordinates (2S)-2-hydroxy-3-oxobutyl phosphate.

Belongs to the DMRL synthase family.

The enzyme catalyses (2S)-2-hydroxy-3-oxobutyl phosphate + 5-amino-6-(D-ribitylamino)uracil = 6,7-dimethyl-8-(1-D-ribityl)lumazine + phosphate + 2 H2O + H(+). The protein operates within cofactor biosynthesis; riboflavin biosynthesis; riboflavin from 2-hydroxy-3-oxobutyl phosphate and 5-amino-6-(D-ribitylamino)uracil: step 1/2. In terms of biological role, catalyzes the formation of 6,7-dimethyl-8-ribityllumazine by condensation of 5-amino-6-(D-ribitylamino)uracil with 3,4-dihydroxy-2-butanone 4-phosphate. This is the penultimate step in the biosynthesis of riboflavin. The protein is 6,7-dimethyl-8-ribityllumazine synthase of Clostridium botulinum (strain 657 / Type Ba4).